Consider the following 228-residue polypeptide: Sec-independent protein translocase protein TatB (228 aa).

Residues 1–21 traverse the membrane as a helical segment; the sequence is MFDFGLGELIFVGIIALIVLG. Disordered regions lie at residues 106–164 and 196–228; these read TPAD…TDKD and VPHT…VRKS. Basic and acidic residues predominate over residues 135–151; that stretch reads PSERSDTSAETLGDDRQ. A compositionally biased stretch (basic residues) spans 206–228; that stretch reads AINRKRDFRPKHRAKPKLRVRKS.

Belongs to the TatB family. As to quaternary structure, the Tat system comprises two distinct complexes: a TatABC complex, containing multiple copies of TatA, TatB and TatC subunits, and a separate TatA complex, containing only TatA subunits. Substrates initially bind to the TatABC complex, which probably triggers association of the separate TatA complex to form the active translocon.

It localises to the cell inner membrane. Its function is as follows. Part of the twin-arginine translocation (Tat) system that transports large folded proteins containing a characteristic twin-arginine motif in their signal peptide across membranes. Together with TatC, TatB is part of a receptor directly interacting with Tat signal peptides. TatB may form an oligomeric binding site that transiently accommodates folded Tat precursor proteins before their translocation. The polypeptide is Sec-independent protein translocase protein TatB (Neisseria gonorrhoeae (strain ATCC 700825 / FA 1090)).